A 37-amino-acid polypeptide reads, in one-letter code: DEEPKESCSDEMCVIYCKGEEYSTGVCDGPQKCKCSD.

3 cysteine pairs are disulfide-bonded: C8–C27, C13–C33, and C17–C35.

It belongs to the short scorpion toxin superfamily. Potassium channel inhibitor family. Alpha-KTx 11 subfamily. Expressed by the venom gland.

The protein localises to the secreted. Its function is as follows. Binds and inhibits voltage-sensitive potassium channels. Inhibits the vertebrate potassium channels Kv1.1/KCNA1, Kv1.2/KCNA2 and Kv1.3/KCNA3 with low affinity. Also weakly inhibits Kv7.1/KCNQ1 (10 uM of the toxin inhibits currents by 21.43%). The protein is Potassium channel toxin alpha-KTx 11.1 of Parabuthus villosus (Black hairy thick-tailed scorpion).